Here is a 319-residue protein sequence, read N- to C-terminus: Red chlorophyll catabolite reductase, chloroplastic (319 aa).

A chloroplast-targeting transit peptide spans 1–39 (MAMIFCNTLYSSSSPSYLSPLTSKPSRFSKNLRPRAQFQ). Residues glutamate 154 and 207-209 (YVS) contribute to the red chlorophyll catabolite site. The stretch at 255 to 286 (LERCVKEEEEKIVVGEEERMELERRDKSFRRK) forms a coiled coil. Aspartate 291 provides a ligand contact to red chlorophyll catabolite.

Homodimer. Interacts with HCAR. Interacts with SGR1, NYC1, NOL, PPH, PAO and the LHCII complex. Part of a SGR1-CCE-LHCII complex, which acts in chlorophyll breakdown. Expressed in all tissues tested, including roots.

The protein localises to the plastid. It localises to the chloroplast stroma. The protein resides in the chloroplast thylakoid membrane. It catalyses the reaction primary fluorescent chlorophyll catabolite + 2 oxidized [2Fe-2S]-[ferredoxin] = red chlorophyll catabolite + 2 reduced [2Fe-2S]-[ferredoxin] + 3 H(+). Its pathway is porphyrin-containing compound metabolism; chlorophyll degradation. Its function is as follows. Catalyzes the key reaction of chlorophyll catabolism, porphyrin macrocycle cleavage of pheophorbide a (pheide a) to a primary fluorescent catabolite (pFCC). Works in a two-step reaction with pheophorbide a oxygenase (PaO) by reducing the C20/C1 double bond of the intermediate, RCC. Belongs to the chlorophyll catabolic enzymes (CCEs). The polypeptide is Red chlorophyll catabolite reductase, chloroplastic (Arabidopsis thaliana (Mouse-ear cress)).